The chain runs to 207 residues: Cytochrome c biogenesis ATP-binding export protein CcmA (207 aa).

Positions 3 to 206 (LMAEGLSARR…AKSLEMTGFV (204 aa)) constitute an ABC transporter domain. 35–42 (GPNGAGKS) contributes to the ATP binding site.

This sequence belongs to the ABC transporter superfamily. CcmA exporter (TC 3.A.1.107) family. In terms of assembly, the complex is composed of two ATP-binding proteins (CcmA) and two transmembrane proteins (CcmB).

The protein localises to the cell inner membrane. The catalysed reaction is heme b(in) + ATP + H2O = heme b(out) + ADP + phosphate + H(+). Functionally, part of the ABC transporter complex CcmAB involved in the biogenesis of c-type cytochromes; once thought to export heme, this seems not to be the case, but its exact role is uncertain. Responsible for energy coupling to the transport system. This chain is Cytochrome c biogenesis ATP-binding export protein CcmA, found in Rhizobium meliloti (strain 1021) (Ensifer meliloti).